The chain runs to 217 residues: Large ribosomal subunit protein eL6 (217 aa).

This sequence belongs to the eukaryotic ribosomal protein eL6 family. In terms of assembly, component of the large ribosomal subunit. May bind IPO9 with low affinity.

It is found in the cytoplasm. It localises to the cytosol. The protein resides in the rough endoplasmic reticulum. In terms of biological role, component of the large ribosomal subunit. The protein is Large ribosomal subunit protein eL6 (rpl-6) of Caenorhabditis elegans.